Consider the following 153-residue polypeptide: Nucleoside diphosphate kinase (153 aa).

ATP contacts are provided by lysine 9, phenylalanine 57, arginine 85, threonine 91, arginine 102, and asparagine 112. The Pros-phosphohistidine intermediate role is filled by histidine 115.

The protein belongs to the NDK family. Homotetramer. It depends on Mg(2+) as a cofactor.

It localises to the cytoplasm. It carries out the reaction a 2'-deoxyribonucleoside 5'-diphosphate + ATP = a 2'-deoxyribonucleoside 5'-triphosphate + ADP. The enzyme catalyses a ribonucleoside 5'-diphosphate + ATP = a ribonucleoside 5'-triphosphate + ADP. Functionally, major role in the synthesis of nucleoside triphosphates other than ATP. The ATP gamma phosphate is transferred to the NDP beta phosphate via a ping-pong mechanism, using a phosphorylated active-site intermediate. The protein is Nucleoside diphosphate kinase of Parabacteroides distasonis (strain ATCC 8503 / DSM 20701 / CIP 104284 / JCM 5825 / NCTC 11152).